The primary structure comprises 303 residues: Diaminopimelate epimerase (303 aa).

Asparagine 15, glutamine 47, and asparagine 67 together coordinate substrate. Catalysis depends on cysteine 76, which acts as the Proton donor. Substrate is bound by residues 77-78 (GN), asparagine 163, asparagine 197, and 215-216 (ER). Catalysis depends on cysteine 224, which acts as the Proton acceptor. 225–226 (GS) contacts substrate. The segment at 278-303 (FDPATGEWSRDTQGLQGSGNADRGAA) is disordered.

The protein belongs to the diaminopimelate epimerase family. Homodimer.

The protein resides in the cytoplasm. The enzyme catalyses (2S,6S)-2,6-diaminopimelate = meso-2,6-diaminopimelate. It functions in the pathway amino-acid biosynthesis; L-lysine biosynthesis via DAP pathway; DL-2,6-diaminopimelate from LL-2,6-diaminopimelate: step 1/1. In terms of biological role, catalyzes the stereoinversion of LL-2,6-diaminopimelate (L,L-DAP) to meso-diaminopimelate (meso-DAP), a precursor of L-lysine and an essential component of the bacterial peptidoglycan. In Brucella melitensis biotype 1 (strain ATCC 23456 / CCUG 17765 / NCTC 10094 / 16M), this protein is Diaminopimelate epimerase.